A 402-amino-acid chain; its full sequence is CCA-adding enzyme (402 aa).

ATP-binding residues include Gly32 and Arg35. Gly32 and Arg35 together coordinate CTP. Asp45 and Asp47 together coordinate Mg(2+). 5 residues coordinate ATP: Arg116, Asp159, Arg162, Arg165, and Arg168. Arg116, Asp159, Arg162, Arg165, and Arg168 together coordinate CTP.

It belongs to the tRNA nucleotidyltransferase/poly(A) polymerase family. Bacterial CCA-adding enzyme type 3 subfamily. In terms of assembly, homodimer. Mg(2+) serves as cofactor.

It carries out the reaction a tRNA precursor + 2 CTP + ATP = a tRNA with a 3' CCA end + 3 diphosphate. The enzyme catalyses a tRNA with a 3' CCA end + 2 CTP + ATP = a tRNA with a 3' CCACCA end + 3 diphosphate. In terms of biological role, catalyzes the addition and repair of the essential 3'-terminal CCA sequence in tRNAs without using a nucleic acid template. Adds these three nucleotides in the order of C, C, and A to the tRNA nucleotide-73, using CTP and ATP as substrates and producing inorganic pyrophosphate. tRNA 3'-terminal CCA addition is required both for tRNA processing and repair. Also involved in tRNA surveillance by mediating tandem CCA addition to generate a CCACCA at the 3' terminus of unstable tRNAs. While stable tRNAs receive only 3'-terminal CCA, unstable tRNAs are marked with CCACCA and rapidly degraded. This is CCA-adding enzyme from Streptococcus pyogenes serotype M1.